Here is a 509-residue protein sequence, read N- to C-terminus: Maturase K (509 aa).

Belongs to the intron maturase 2 family. MatK subfamily.

Its subcellular location is the plastid. The protein resides in the chloroplast. In terms of biological role, usually encoded in the trnK tRNA gene intron. Probably assists in splicing its own and other chloroplast group II introns. This Chamaecyparis obtusa (Hinoki false-cypress) protein is Maturase K.